A 393-amino-acid polypeptide reads, in one-letter code: Zinc finger CCHC domain-containing protein 18 (393 aa).

Disordered regions lie at residues 281-300 (VEPE…RGTA) and 313-341 (DDFD…RTRK). 2 stretches are compositionally biased toward polar residues: residues 291–300 (PGASSLRGTA) and 320–331 (PSTSSGSGQRNN). The CCHC-type zinc-finger motif lies at 346 to 363 (IRCPHCGEEGHAKETCDN).

The protein belongs to the ZCCHC12 family.

This is Zinc finger CCHC domain-containing protein 18 from Mus musculus (Mouse).